Reading from the N-terminus, the 486-residue chain is Malonate-semialdehyde dehydrogenase (486 aa).

NAD(+) is bound by residues F154, K178, E181, R182, and S231. C286 serves as the catalytic Nucleophile. Residue E386 participates in NAD(+) binding.

It belongs to the aldehyde dehydrogenase family. IolA subfamily. As to quaternary structure, homotetramer.

It carries out the reaction 3-oxopropanoate + NAD(+) + CoA + H2O = hydrogencarbonate + acetyl-CoA + NADH + H(+). The catalysed reaction is 2-methyl-3-oxopropanoate + NAD(+) + CoA + H2O = propanoyl-CoA + hydrogencarbonate + NADH + H(+). The protein operates within polyol metabolism; myo-inositol degradation into acetyl-CoA; acetyl-CoA from myo-inositol: step 7/7. Its function is as follows. Catalyzes the oxidation of malonate semialdehyde (MSA) and methylmalonate semialdehyde (MMSA) into acetyl-CoA and propanoyl-CoA, respectively. Is involved in a myo-inositol catabolic pathway. Bicarbonate, and not CO2, is the end-product of the enzymatic reaction. This chain is Malonate-semialdehyde dehydrogenase, found in Bacillus cereus (strain G9842).